The chain runs to 183 residues: Helofensin-1 (183 aa).

An N-terminal signal peptide occupies residues 1–26; it reads MQMDWLFIAVVSAIGLLSSGVPGTQG. The C(6)C(4)C(9)C(6)CC 1; approximate repeat unit spans residues 27-64; it reads AYTTEQCRALNGTCRFYACFPKNVVIGKCDWLGWGCCA. The stretch at 65-101 is one C(6)C(4)C(9)C(6)CC 2; approximate repeat; it reads RTPLERCTAKKGTCTASGCTETDTDHGPCDGGAQCCQ. A C(6)C(4)C(9)C(6)CC 3; approximate repeat occupies 102-139; the sequence is RDPVKYCKFHGNVCGRGKCPMDHIPIGEQCMPGYPCCK. The stretch at 140–177 is one C(6)C(4)C(9)C(6)CC 4; approximate repeat; the sequence is RDGPAYCKSKGGKCLRRCSQIVPTDIIGVCADGVPCCK.

Belongs to the beta-defensin family. Helofensin subfamily. In terms of tissue distribution, expressed by the mandibular venom gland.

The protein resides in the secreted. Lethal toxin which possesses an inhibitory effect on direct electrical stimulation of the isolated hemi-diaphragm of mice. Neither hemorrhagic nor hemolytic activities are detected. Phospholipase A2 activity, proteolytic activity and arginine esterolytic activity are absent. The protein is Helofensin-1 of Heloderma suspectum cinctum (Banded Gila monster).